We begin with the raw amino-acid sequence, 342 residues long: Ribosomal RNA small subunit methyltransferase C (342 aa).

The protein belongs to the methyltransferase superfamily. RsmC family. As to quaternary structure, monomer.

The protein resides in the cytoplasm. It catalyses the reaction guanosine(1207) in 16S rRNA + S-adenosyl-L-methionine = N(2)-methylguanosine(1207) in 16S rRNA + S-adenosyl-L-homocysteine + H(+). Its function is as follows. Specifically methylates the guanine in position 1207 of 16S rRNA in the 30S particle. The polypeptide is Ribosomal RNA small subunit methyltransferase C (Salmonella enteritidis PT4 (strain P125109)).